We begin with the raw amino-acid sequence, 73 residues long: Conotoxin CnIIIG (73 aa).

An N-terminal signal peptide occupies residues 1-19 (MSKLGVLLTICLLLLPLTA). A propeptide spanning residues 20-48 (LPMDEDQPADQPADRMQDDISSEQYPLFD) is cleaved from the precursor. Gln51 carries the pyrrolidone carboxylic acid modification. Cystine bridges form between Cys53/Cys72, Cys54/Cys70, and Cys60/Cys73.

This sequence belongs to the conotoxin M superfamily. Expressed by the venom duct.

Its subcellular location is the secreted. Functionally, shows a paralytic effect in fish. The protein is Conotoxin CnIIIG of Conus consors (Singed cone).